A 380-amino-acid chain; its full sequence is 4-hydroxy-3-methylbut-2-en-1-yl diphosphate synthase (flavodoxin) (380 aa).

4 residues coordinate [4Fe-4S] cluster: C279, C282, C314, and E321.

It belongs to the IspG family. It depends on [4Fe-4S] cluster as a cofactor.

It catalyses the reaction (2E)-4-hydroxy-3-methylbut-2-enyl diphosphate + oxidized [flavodoxin] + H2O + 2 H(+) = 2-C-methyl-D-erythritol 2,4-cyclic diphosphate + reduced [flavodoxin]. It functions in the pathway isoprenoid biosynthesis; isopentenyl diphosphate biosynthesis via DXP pathway; isopentenyl diphosphate from 1-deoxy-D-xylulose 5-phosphate: step 5/6. Functionally, converts 2C-methyl-D-erythritol 2,4-cyclodiphosphate (ME-2,4cPP) into 1-hydroxy-2-methyl-2-(E)-butenyl 4-diphosphate. The polypeptide is 4-hydroxy-3-methylbut-2-en-1-yl diphosphate synthase (flavodoxin) (Tropheryma whipplei (strain TW08/27) (Whipple's bacillus)).